Here is a 394-residue protein sequence, read N- to C-terminus: 1-deoxy-D-xylulose 5-phosphate reductoisomerase (394 aa).

The NADPH site is built by T28, G29, S30, I31, N57, and N133. Position 134 (K134) interacts with 1-deoxy-D-xylulose 5-phosphate. E135 is an NADPH binding site. D157 lines the Mn(2+) pocket. Positions 158, 159, 183, and 206 each coordinate 1-deoxy-D-xylulose 5-phosphate. E159 is a Mn(2+) binding site. G212 is an NADPH binding site. 1-deoxy-D-xylulose 5-phosphate is bound by residues S219, N224, K225, and E228. A Mn(2+)-binding site is contributed by E228.

This sequence belongs to the DXR family. The cofactor is Mg(2+). Mn(2+) is required as a cofactor.

It catalyses the reaction 2-C-methyl-D-erythritol 4-phosphate + NADP(+) = 1-deoxy-D-xylulose 5-phosphate + NADPH + H(+). It functions in the pathway isoprenoid biosynthesis; isopentenyl diphosphate biosynthesis via DXP pathway; isopentenyl diphosphate from 1-deoxy-D-xylulose 5-phosphate: step 1/6. In terms of biological role, catalyzes the NADPH-dependent rearrangement and reduction of 1-deoxy-D-xylulose-5-phosphate (DXP) to 2-C-methyl-D-erythritol 4-phosphate (MEP). The chain is 1-deoxy-D-xylulose 5-phosphate reductoisomerase from Nocardia farcinica (strain IFM 10152).